Consider the following 157-residue polypeptide: Endoribonuclease YbeY (157 aa).

Positions 122, 126, and 132 each coordinate Zn(2+).

Belongs to the endoribonuclease YbeY family. Zn(2+) serves as cofactor.

Its subcellular location is the cytoplasm. Its function is as follows. Single strand-specific metallo-endoribonuclease involved in late-stage 70S ribosome quality control and in maturation of the 3' terminus of the 16S rRNA. In Bacillus velezensis (strain DSM 23117 / BGSC 10A6 / LMG 26770 / FZB42) (Bacillus amyloliquefaciens subsp. plantarum), this protein is Endoribonuclease YbeY.